The following is a 412-amino-acid chain: Multifunctional CCA protein (412 aa).

Residues G8 and R11 each contribute to the ATP site. CTP-binding residues include G8 and R11. Mg(2+) contacts are provided by E21 and D23. The ATP site is built by R91, R137, and R140. The CTP site is built by R91, R137, and R140. The 102-residue stretch at 228–329 (CGIHTLMSLQ…WRLLQRLDVL (102 aa)) folds into the HD domain.

The protein belongs to the tRNA nucleotidyltransferase/poly(A) polymerase family. Bacterial CCA-adding enzyme type 1 subfamily. In terms of assembly, monomer. Can also form homodimers and oligomers. Mg(2+) serves as cofactor. Requires Ni(2+) as cofactor.

The enzyme catalyses a tRNA precursor + 2 CTP + ATP = a tRNA with a 3' CCA end + 3 diphosphate. It carries out the reaction a tRNA with a 3' CCA end + 2 CTP + ATP = a tRNA with a 3' CCACCA end + 3 diphosphate. Functionally, catalyzes the addition and repair of the essential 3'-terminal CCA sequence in tRNAs without using a nucleic acid template. Adds these three nucleotides in the order of C, C, and A to the tRNA nucleotide-73, using CTP and ATP as substrates and producing inorganic pyrophosphate. tRNA 3'-terminal CCA addition is required both for tRNA processing and repair. Also involved in tRNA surveillance by mediating tandem CCA addition to generate a CCACCA at the 3' terminus of unstable tRNAs. While stable tRNAs receive only 3'-terminal CCA, unstable tRNAs are marked with CCACCA and rapidly degraded. In Acinetobacter baumannii (strain ATCC 17978 / DSM 105126 / CIP 53.77 / LMG 1025 / NCDC KC755 / 5377), this protein is Multifunctional CCA protein.